Here is a 73-residue protein sequence, read N- to C-terminus: Small ribosomal subunit protein eS27 (73 aa).

Zn(2+) is bound by residues C28, C31, C47, and C50. The segment at 28–50 (CVDCGNEQIIFGNASTEVKCHIC) adopts a C4-type zinc-finger fold.

It belongs to the eukaryotic ribosomal protein eS27 family. Part of the 30S ribosomal subunit. Requires Zn(2+) as cofactor.

This is Small ribosomal subunit protein eS27 from Methanopyrus kandleri (strain AV19 / DSM 6324 / JCM 9639 / NBRC 100938).